The primary structure comprises 736 residues: MVKFKQTSEVLKIMGNIEQIRNIGITAHVDHGKTTLSDTLLSAAGLISEKIAGQALALDYLDVEQKRQMTVKAANASLYHEYKGKPYLINLIDTPGHVDFQSKTIRALRVIDGAIVVVDAVEGVMTQTEMYLRVALEERVRPVLFINKIDRLIKELRLSPTEIQQRLVQIVRDVNTLIATYADKEFQKAWLLDPMKGQVAFGSARDRWGLTIPLVQQKGIKFSDIVDVYTRGKEAVAELQKTAPLHEAILDMVVKHIPNPREAQRYRIPKIWHGDPNHEIVKYLMEADPNGPLVMLINDIRVDPHAGLVATGRIYSGTLRPGEEVWLVNARVPQRVLQVSLYMGPYRELADEITAGNIAAALGLEKARSGETVVSMKYKDTMTPFEKLKMITESVVTVAIEPKNPQQTTKLIDALYKLHLEDPSLIVKINEETGEYLLSGVGTLHIEIALTLLKDLYGLEVVTSPPVIVYRETIRDRSQVFEGKSPNKHNKFYISVTPLNEETLRLLSEGIIMEDMDARERAKILREQAGWDADEARRIMAIDENLNILIDMTTGVQYLREVKDTIIQGFRLAMREGPLAMEPVRGVKVVLHDAVIHEDPAHRGPAQIFPAVRNAIFAGFLTARPTILEPILKLDIRSPMEYIGNISSVITKKRGKLIEVQQMETTARVIAEIPVSESFDIADMLRNVTAGKAIWGQEFSRWAPVPENMLMDLIAKIRTRKGLKPEPPKPEDFLSP.

A tr-type G domain is found at 18 to 261 (EQIRNIGITA…MVVKHIPNPR (244 aa)). GTP is bound by residues 27-34 (AHVDHGKT), 93-97 (DTPGH), and 147-150 (NKID). Histidine 602 bears the Diphthamide mark.

This sequence belongs to the TRAFAC class translation factor GTPase superfamily. Classic translation factor GTPase family. EF-G/EF-2 subfamily.

It is found in the cytoplasm. Catalyzes the GTP-dependent ribosomal translocation step during translation elongation. During this step, the ribosome changes from the pre-translocational (PRE) to the post-translocational (POST) state as the newly formed A-site-bound peptidyl-tRNA and P-site-bound deacylated tRNA move to the P and E sites, respectively. Catalyzes the coordinated movement of the two tRNA molecules, the mRNA and conformational changes in the ribosome. The chain is Elongation factor 2 from Desulfurococcus amylolyticus (strain DSM 18924 / JCM 16383 / VKM B-2413 / 1221n) (Desulfurococcus kamchatkensis).